The primary structure comprises 452 residues: Phosphoglucosamine mutase (452 aa).

The active-site Phosphoserine intermediate is Ser-108. Ser-108, Asp-247, Asp-249, and Asp-251 together coordinate Mg(2+). At Ser-108 the chain carries Phosphoserine.

This sequence belongs to the phosphohexose mutase family. Requires Mg(2+) as cofactor. Activated by phosphorylation.

It catalyses the reaction alpha-D-glucosamine 1-phosphate = D-glucosamine 6-phosphate. In terms of biological role, catalyzes the conversion of glucosamine-6-phosphate to glucosamine-1-phosphate. The sequence is that of Phosphoglucosamine mutase from Burkholderia thailandensis (strain ATCC 700388 / DSM 13276 / CCUG 48851 / CIP 106301 / E264).